Consider the following 833-residue polypeptide: Leucine--tRNA ligase (833 aa).

Residues 41-52 (PYPSGAGLHVGH) carry the 'HIGH' region motif. The 'KMSKS' region motif lies at 610 to 614 (KMSKS). K613 provides a ligand contact to ATP.

This sequence belongs to the class-I aminoacyl-tRNA synthetase family.

Its subcellular location is the cytoplasm. It carries out the reaction tRNA(Leu) + L-leucine + ATP = L-leucyl-tRNA(Leu) + AMP + diphosphate. The polypeptide is Leucine--tRNA ligase (Streptococcus pneumoniae serotype 4 (strain ATCC BAA-334 / TIGR4)).